A 31-amino-acid polypeptide reads, in one-letter code: Cytochrome b6-f complex subunit 6 (31 aa).

Residues 4-26 form a helical membrane-spanning segment; it reads LTSYFGFLLAALTITSALFIGLN.

Belongs to the PetL family. The 4 large subunits of the cytochrome b6-f complex are cytochrome b6, subunit IV (17 kDa polypeptide, PetD), cytochrome f and the Rieske protein, while the 4 small subunits are PetG, PetL, PetM and PetN. The complex functions as a dimer.

It is found in the plastid. Its subcellular location is the chloroplast thylakoid membrane. In terms of biological role, component of the cytochrome b6-f complex, which mediates electron transfer between photosystem II (PSII) and photosystem I (PSI), cyclic electron flow around PSI, and state transitions. PetL is important for photoautotrophic growth as well as for electron transfer efficiency and stability of the cytochrome b6-f complex. The protein is Cytochrome b6-f complex subunit 6 of Blitum bonus-henricus (Good King Henry).